Here is a 190-residue protein sequence, read N- to C-terminus: MKLLILSLALVLALSQVKGNQPDWADEAANGAHQDAWKSLKADVENVYYMVKATYKNDPVWGNDFTCVGVMANDVNEDEKSIQAEFLFMNNADTNMQFATEKVTAVKMYGYNRENAFRYETEDGQVFTDVIAYSDDNCDVIYVPGTDGNEEGYELWTTDYDNIPANCLNKFNEYAVGRETRDVFTSACLE.

Positions 1–19 are cleaved as a signal peptide; the sequence is MKLLILSLALVLALSQVKG. Residues Ser-39, Asp-43, Tyr-55, Asp-58, Trp-61, Glu-101, Phe-117, Tyr-119, Phe-127, Asp-139, Glu-154, and Trp-156 each contribute to the histamine site. Intrachain disulfides connect Cys-67–Cys-188 and Cys-138–Cys-167.

It belongs to the calycin superfamily. Histamine-binding salivary protein family. In terms of assembly, monomer. In terms of tissue distribution, expressed in salivary glands.

The protein resides in the secreted. Salivary tick protein that acts by scavenging histamine at the wound site, outcompeting histamine receptors for histamine, thereby overcoming host inflammatory responses. Binds histamine with a high-affinity (Kd=1.7 nM). Contains two binding histamine sites (H and L), that appear to bind histamine with differing affinities (high and low). The protein is Female-specific histamine-binding protein 2 of Rhipicephalus appendiculatus (Brown ear tick).